The chain runs to 426 residues: Serine--tRNA ligase (426 aa).

Residue 233 to 235 (TAE) participates in L-serine binding. Residue 264–266 (RSE) coordinates ATP. Position 287 (glutamate 287) interacts with L-serine. Residue 351-354 (EISS) coordinates ATP. Position 387 (serine 387) interacts with L-serine.

This sequence belongs to the class-II aminoacyl-tRNA synthetase family. Type-1 seryl-tRNA synthetase subfamily. In terms of assembly, homodimer. The tRNA molecule binds across the dimer.

Its subcellular location is the cytoplasm. It catalyses the reaction tRNA(Ser) + L-serine + ATP = L-seryl-tRNA(Ser) + AMP + diphosphate + H(+). The enzyme catalyses tRNA(Sec) + L-serine + ATP = L-seryl-tRNA(Sec) + AMP + diphosphate + H(+). The protein operates within aminoacyl-tRNA biosynthesis; selenocysteinyl-tRNA(Sec) biosynthesis; L-seryl-tRNA(Sec) from L-serine and tRNA(Sec): step 1/1. Catalyzes the attachment of serine to tRNA(Ser). Is also able to aminoacylate tRNA(Sec) with serine, to form the misacylated tRNA L-seryl-tRNA(Sec), which will be further converted into selenocysteinyl-tRNA(Sec). This chain is Serine--tRNA ligase, found in Francisella philomiragia subsp. philomiragia (strain ATCC 25017 / CCUG 19701 / FSC 153 / O#319-036).